The chain runs to 376 residues: UDP-N-acetylglucosamine 2-epimerase (376 aa).

Substrate is bound by residues Arg-10, Lys-15, Asp-95, Glu-117, His-213, Gln-271, Phe-276, 290–292 (SGG), Glu-296, and Arg-313.

This sequence belongs to the UDP-N-acetylglucosamine 2-epimerase family. As to quaternary structure, homodimer.

It localises to the cytoplasm. It catalyses the reaction UDP-N-acetyl-alpha-D-glucosamine = UDP-N-acetyl-alpha-D-mannosamine. The protein operates within bacterial outer membrane biogenesis; enterobacterial common antigen biosynthesis. Allosterically activated by its substrate, UDP-GlcNAc. Its function is as follows. Catalyzes the reversible epimerization at C-2 of UDP-N-acetylglucosamine (UDP-GlcNAc) and thereby provides bacteria with UDP-N-acetylmannosamine (UDP-ManNAc), the activated donor of ManNAc residues. Also involved in bacteriophage N4 adsorption. In Escherichia coli (strain K12), this protein is UDP-N-acetylglucosamine 2-epimerase.